We begin with the raw amino-acid sequence, 192 residues long: Phosphomevalonate kinase (192 aa).

ATP-binding positions include 17–23 (KRKSGKD) and R141. N170 contributes to the substrate binding site. The ATP site is built by H171 and Q180.

Monomer.

It localises to the cytoplasm. The protein localises to the cytosol. It catalyses the reaction (R)-5-phosphomevalonate + ATP = (R)-5-diphosphomevalonate + ADP. It functions in the pathway isoprenoid biosynthesis; isopentenyl diphosphate biosynthesis via mevalonate pathway; isopentenyl diphosphate from (R)-mevalonate: step 2/3. Catalyzes the reversible ATP-dependent phosphorylation of mevalonate 5-phosphate to produce mevalonate diphosphate and ADP, a key step in the mevalonic acid mediated biosynthesis of isopentenyl diphosphate and other polyisoprenoid metabolites. The protein is Phosphomevalonate kinase (Pmvk) of Mus musculus (Mouse).